Consider the following 352-residue polypeptide: Putative formin-like protein 15b (352 aa).

In terms of domain architecture, FH2 spans 1–350 (MTLFNFIKLF…KDAKEAEMEK (350 aa)).

It belongs to the formin-like family. Class-II subfamily.

In Arabidopsis thaliana (Mouse-ear cress), this protein is Putative formin-like protein 15b (FH15B).